Reading from the N-terminus, the 491-residue chain is UDP-N-acetylmuramate--L-alanine ligase (491 aa).

126–132 provides a ligand contact to ATP; sequence GTHGKTT.

Belongs to the MurCDEF family.

It localises to the cytoplasm. The catalysed reaction is UDP-N-acetyl-alpha-D-muramate + L-alanine + ATP = UDP-N-acetyl-alpha-D-muramoyl-L-alanine + ADP + phosphate + H(+). It functions in the pathway cell wall biogenesis; peptidoglycan biosynthesis. Functionally, cell wall formation. This Escherichia coli (strain K12 / MC4100 / BW2952) protein is UDP-N-acetylmuramate--L-alanine ligase.